A 239-amino-acid polypeptide reads, in one-letter code: Fatty acid metabolism regulator protein (239 aa).

The HTH gntR-type domain occupies 6–74; the sequence is QSPAGFAEEY…HGKPTKVNNF (69 aa). The segment at residues 34–53 is a DNA-binding region (H-T-H motif); it reads ERELSELIGVTRTTLREVLQ.

As to quaternary structure, homodimer.

The protein resides in the cytoplasm. Its function is as follows. Multifunctional regulator of fatty acid metabolism. This is Fatty acid metabolism regulator protein from Yersinia enterocolitica serotype O:8 / biotype 1B (strain NCTC 13174 / 8081).